The sequence spans 112 residues: MTMNSFERRNKIIQLVNEQGTVLVQDLAGVFAASEATIRADLRFLEQKGVVTRFHGGAAKIMSGNSETETQEVGFKERFQLASAPKNRIAQAAVKMIHEGMTDPTHVIWTQA.

In terms of domain architecture, HTH deoR-type spans 5–60 (SFERRNKIIQLVNEQGTVLVQDLAGVFAASEATIRADLRFLEQKGVVTRFHGGAAK). Positions 22–41 (VLVQDLAGVFAASEATIRAD) form a DNA-binding region, H-T-H motif.

Repressor of the gat operon for galacticol transport and metabolism. In K12 strains the operon is constitutively expressed because this gene is inactive. In Escherichia coli (strain K12), this protein is Putative galactitol utilization operon repressor (gatR).